The following is a 236-amino-acid chain: MGMGTFTTDESDKHEESYLSLGLTVSQSKKNNTEYPKVLLLLAAYLDRSVQKNEDLLDSNKIKDSSTIFHGHRAPDLSIKLYAERIFKYSECSPSCFVLALIYMERYLQQPHVYMTSLSVHRLLITSVVVAAKFTDDAFFNNAFYARVGGISTVEMNRLELDLLFNLDFRLKVDLETFGSYCLQLEKETMVLVIDRPIQQVHGVNSTKDLSRNSSIDESCKSELMRYSSQALQGCS.

This sequence belongs to the cyclin family. Cyclin U/P subfamily.

This Oryza sativa subsp. japonica (Rice) protein is Cyclin-P3-1 (CYCP3-1).